The primary structure comprises 493 residues: Glutamate synthase [NADPH] small chain (493 aa).

299–313 (GGGDTGADCVATALR) contributes to the NADP(+) binding site.

Belongs to the glutamate synthase family. Aggregate of 4 catalytic active heterodimers, consisting of a large and a small subunit.

It catalyses the reaction 2 L-glutamate + NADP(+) = L-glutamine + 2-oxoglutarate + NADPH + H(+). It participates in amino-acid biosynthesis; L-glutamate biosynthesis via GLT pathway; L-glutamate from 2-oxoglutarate and L-glutamine (NADP(+) route): step 1/1. It functions in the pathway energy metabolism; nitrogen metabolism. The chain is Glutamate synthase [NADPH] small chain (gltB) from Bacillus subtilis (strain 168).